The following is a 197-amino-acid chain: dITP/XTP pyrophosphatase (197 aa).

8 to 13 (TGNPGK) is a substrate binding site. Residues Glu-40 and Asp-69 each contribute to the Mg(2+) site. Asp-69 acts as the Proton acceptor in catalysis. Residues Ser-70, 154–157 (FGYD), Lys-177, and 182–183 (HR) contribute to the substrate site.

Belongs to the HAM1 NTPase family. In terms of assembly, homodimer. Mg(2+) is required as a cofactor.

It carries out the reaction XTP + H2O = XMP + diphosphate + H(+). The enzyme catalyses dITP + H2O = dIMP + diphosphate + H(+). It catalyses the reaction ITP + H2O = IMP + diphosphate + H(+). Functionally, pyrophosphatase that catalyzes the hydrolysis of nucleoside triphosphates to their monophosphate derivatives, with a high preference for the non-canonical purine nucleotides XTP (xanthosine triphosphate), dITP (deoxyinosine triphosphate) and ITP. Seems to function as a house-cleaning enzyme that removes non-canonical purine nucleotides from the nucleotide pool, thus preventing their incorporation into DNA/RNA and avoiding chromosomal lesions. The chain is dITP/XTP pyrophosphatase from Photorhabdus laumondii subsp. laumondii (strain DSM 15139 / CIP 105565 / TT01) (Photorhabdus luminescens subsp. laumondii).